Reading from the N-terminus, the 198-residue chain is Holliday junction branch migration complex subunit RuvA (198 aa).

The segment at 1–61 (MYEYFEGIIQ…DNDQTLYGFE (61 aa)) is domain I. A domain II region spans residues 62 to 140 (GAADKRTFNQ…TDGQPAAAAI (79 aa)). The interval 141 to 145 (APVAS) is flexible linker. The interval 146–198 (DVDSELADALAALVALGYPQRTVDGLTDTLKAFSAKTTDAYLREGLRLLSGKA) is domain III.

It belongs to the RuvA family. As to quaternary structure, homotetramer. Forms an RuvA(8)-RuvB(12)-Holliday junction (HJ) complex. HJ DNA is sandwiched between 2 RuvA tetramers; dsDNA enters through RuvA and exits via RuvB. An RuvB hexamer assembles on each DNA strand where it exits the tetramer. Each RuvB hexamer is contacted by two RuvA subunits (via domain III) on 2 adjacent RuvB subunits; this complex drives branch migration. In the full resolvosome a probable DNA-RuvA(4)-RuvB(12)-RuvC(2) complex forms which resolves the HJ.

The protein localises to the cytoplasm. Its function is as follows. The RuvA-RuvB-RuvC complex processes Holliday junction (HJ) DNA during genetic recombination and DNA repair, while the RuvA-RuvB complex plays an important role in the rescue of blocked DNA replication forks via replication fork reversal (RFR). RuvA specifically binds to HJ cruciform DNA, conferring on it an open structure. The RuvB hexamer acts as an ATP-dependent pump, pulling dsDNA into and through the RuvAB complex. HJ branch migration allows RuvC to scan DNA until it finds its consensus sequence, where it cleaves and resolves the cruciform DNA. This chain is Holliday junction branch migration complex subunit RuvA, found in Lacticaseibacillus casei (strain BL23) (Lactobacillus casei).